Consider the following 300-residue polypeptide: Geranylgeranyl pyrophosphate synthase (300 aa).

Met-1 is modified (N-acetylmethionine). 3 residues coordinate isopentenyl diphosphate: Lys-25, Arg-28, and His-57. The Mg(2+) site is built by Asp-64 and Asp-68. Arg-73 serves as a coordination point for dimethylallyl diphosphate. Arg-74 provides a ligand contact to isopentenyl diphosphate. Dimethylallyl diphosphate contacts are provided by Lys-151, Thr-152, Gln-185, Lys-202, and Lys-212.

It belongs to the FPP/GGPP synthase family. As to quaternary structure, homohexamer; trimer of homodimers. Requires Mg(2+) as cofactor. As to expression, abundantly expressed in testis. Found in other tissues to a lower extent. Expressed in dermal fibroblast and skeletal muscle.

It localises to the cytoplasm. Its subcellular location is the perinuclear region. It is found in the myofibril. The protein resides in the sarcomere. The protein localises to the z line. The catalysed reaction is isopentenyl diphosphate + dimethylallyl diphosphate = (2E)-geranyl diphosphate + diphosphate. The enzyme catalyses isopentenyl diphosphate + (2E)-geranyl diphosphate = (2E,6E)-farnesyl diphosphate + diphosphate. It catalyses the reaction isopentenyl diphosphate + (2E,6E)-farnesyl diphosphate = (2E,6E,10E)-geranylgeranyl diphosphate + diphosphate. It functions in the pathway isoprenoid biosynthesis; farnesyl diphosphate biosynthesis; farnesyl diphosphate from geranyl diphosphate and isopentenyl diphosphate: step 1/1. It participates in isoprenoid biosynthesis; geranyl diphosphate biosynthesis; geranyl diphosphate from dimethylallyl diphosphate and isopentenyl diphosphate: step 1/1. Its pathway is isoprenoid biosynthesis; geranylgeranyl diphosphate biosynthesis; geranylgeranyl diphosphate from farnesyl diphosphate and isopentenyl diphosphate: step 1/1. With respect to regulation, subject to product inhibition by geranylgeranyl diphosphate. In terms of biological role, catalyzes the trans-addition of the three molecules of IPP onto DMAPP to form geranylgeranyl pyrophosphate, an important precursor of carotenoids and geranylated proteins. This is Geranylgeranyl pyrophosphate synthase (GGPS1) from Homo sapiens (Human).